Reading from the N-terminus, the 79-residue chain is Sec-independent protein translocase protein TatA (79 aa).

Residues 1-21 form a helical membrane-spanning segment; sequence MGGISIWQLLIILVIVVLLFG. The segment at 45 to 79 is disordered; that stretch reads EEEKDADFEQKKQVEEKSAAEPVSTETQSDVKEKS. Residues 51 to 63 show a composition bias toward basic and acidic residues; the sequence is DFEQKKQVEEKSA.

The protein belongs to the TatA/E family. In terms of assembly, the Tat system comprises two distinct complexes: a TatABC complex, containing multiple copies of TatA, TatB and TatC subunits, and a separate TatA complex, containing only TatA subunits. Substrates initially bind to the TatABC complex, which probably triggers association of the separate TatA complex to form the active translocon.

The protein resides in the cell inner membrane. Part of the twin-arginine translocation (Tat) system that transports large folded proteins containing a characteristic twin-arginine motif in their signal peptide across membranes. TatA could form the protein-conducting channel of the Tat system. This Alteromonas mediterranea (strain DSM 17117 / CIP 110805 / LMG 28347 / Deep ecotype) protein is Sec-independent protein translocase protein TatA.